A 539-amino-acid polypeptide reads, in one-letter code: Serine/threonine-protein kinase BUR1 (539 aa).

The segment covering 1-15 (MEKLSETTPNGTSPR) has biased composition (polar residues). Positions 1–27 (MEKLSETTPNGTSPRTFALNHSRPRSS) are disordered. One can recognise a Protein kinase domain in the interval 37–339 (YELLGKLGEG…AVDALQHPWF (303 aa)). Residues 43–51 (LGEGTFGEV) and Lys-66 each bind ATP. The Proton acceptor role is filled by Asp-169. Residues 370-539 (AALPPAPKGG…DRPDHNGYRR (170 aa)) are disordered. Composition is skewed to basic and acidic residues over residues 414-428 (NGPDDRRPAWQRERG), 471-514 (NRDD…DRGT), and 521-539 (PRHDRSRDRDRPDHNGYRR).

Belongs to the protein kinase superfamily. CMGC Ser/Thr protein kinase family. CDC2/CDKX subfamily.

The protein resides in the nucleus. The catalysed reaction is L-seryl-[protein] + ATP = O-phospho-L-seryl-[protein] + ADP + H(+). The enzyme catalyses L-threonyl-[protein] + ATP = O-phospho-L-threonyl-[protein] + ADP + H(+). It catalyses the reaction [DNA-directed RNA polymerase] + ATP = phospho-[DNA-directed RNA polymerase] + ADP + H(+). Serine/threonine-protein kinase involved in transcription regulation. Phosphorylates the UBC2/RAD6 ubiquitin-conjugating enzyme (E2), leading to monoubiquitination of histone H2B and the silencing of telomeric-associated genes. Also required for histone H3 methylation. Necessary for the recovery from pheromone-induced growth arrest in the cell cycle G1 phase. This chain is Serine/threonine-protein kinase BUR1 (BUR1), found in Gibberella zeae (strain ATCC MYA-4620 / CBS 123657 / FGSC 9075 / NRRL 31084 / PH-1) (Wheat head blight fungus).